We begin with the raw amino-acid sequence, 645 residues long: MPKTFTQIPLTRPNTPLLDTLASPADLRKLPTPQLERVVDELREYLLYAVGQCGGHFGAGLGVVELTVALHYLYHTPDDKLVWDVGHQCYPHKILTGRRESLTSIRQAGGLSGFPKRSESEYDTFGVGHSSTSISAALGMALGAEMAGSDRRAVAIIGDGAMTAGQAFEAMSHAAHTRSNLLVILNDNNMSISHNVGGLSNYFARIWASKSYIALREGGKKVLSTMPAAWDFIRRTEESMKNMVSPDMLFEAIGFNYIGPIDGHNVNELVSTLRNLRDLEGPQLLHVYTTKGKGFAPAEADPVGYHAINKIEPKPKVQVAVPSKPSAAKQKLPKYQDIFGQWLCDMAEQDPRLVGITPAMCEGSGMVEFSRRFPGRYHDVAICEQHAVTLAGGLACENQKPVVAIYSTFLQRGYDQLIHDVALQELDVTFGLDRAGLVGEDGATHGGVFDLAYLRTVPNMIIAAPSDENECRQLLYSAYQHEGPAAVRYPRGTGPGATIEQTMTALPIGQSRTLREGLQVAILAFGAMVPAALEAAIPLNATVIDMRWVKPLDRDAILRAAAQHTLLVTVEDHQQMGGAGSAVNELLHEEAVVLDVLNLALPDHFIHHGKRDVLLAQAGLDAAGIERQIRERLNRQQRLREAHQR.

Residues histidine 87 and glycine 128–serine 130 each bind thiamine diphosphate. Mg(2+) is bound at residue aspartate 159. Thiamine diphosphate contacts are provided by residues glycine 160–alanine 161, asparagine 188, phenylalanine 295, and glutamate 384. A Mg(2+)-binding site is contributed by asparagine 188.

This sequence belongs to the transketolase family. DXPS subfamily. Homodimer. Mg(2+) serves as cofactor. Thiamine diphosphate is required as a cofactor.

It carries out the reaction D-glyceraldehyde 3-phosphate + pyruvate + H(+) = 1-deoxy-D-xylulose 5-phosphate + CO2. It functions in the pathway metabolic intermediate biosynthesis; 1-deoxy-D-xylulose 5-phosphate biosynthesis; 1-deoxy-D-xylulose 5-phosphate from D-glyceraldehyde 3-phosphate and pyruvate: step 1/1. In terms of biological role, catalyzes the acyloin condensation reaction between C atoms 2 and 3 of pyruvate and glyceraldehyde 3-phosphate to yield 1-deoxy-D-xylulose-5-phosphate (DXP). This Alcanivorax borkumensis (strain ATCC 700651 / DSM 11573 / NCIMB 13689 / SK2) protein is 1-deoxy-D-xylulose-5-phosphate synthase.